The primary structure comprises 428 residues: tRNA modification GTPase MnmE (428 aa).

Residues Arg-20, Glu-76, and Arg-116 each contribute to the (6S)-5-formyl-5,6,7,8-tetrahydrofolate site. One can recognise a TrmE-type G domain in the interval 212-351 (GFEVAIIGAP…LVEALQDRLL (140 aa)). Asn-222 is a K(+) binding site. Residues 222–227 (NAGKST), 241–247 (SEVAGTT), and 266–269 (DTAG) contribute to the GTP site. Mg(2+) is bound at residue Ser-226. 3 residues coordinate K(+): Ser-241, Val-243, and Thr-246. Thr-247 is a Mg(2+) binding site. Position 428 (Lys-428) interacts with (6S)-5-formyl-5,6,7,8-tetrahydrofolate.

This sequence belongs to the TRAFAC class TrmE-Era-EngA-EngB-Septin-like GTPase superfamily. TrmE GTPase family. Homodimer. Heterotetramer of two MnmE and two MnmG subunits. Requires K(+) as cofactor.

It localises to the cytoplasm. Exhibits a very high intrinsic GTPase hydrolysis rate. Involved in the addition of a carboxymethylaminomethyl (cmnm) group at the wobble position (U34) of certain tRNAs, forming tRNA-cmnm(5)s(2)U34. The protein is tRNA modification GTPase MnmE of Cereibacter sphaeroides (strain ATCC 17025 / ATH 2.4.3) (Rhodobacter sphaeroides).